The primary structure comprises 386 residues: Homeobox protein Hox-A13 (386 aa).

The homeobox DNA-binding region spans 320–379 (GRKKRVPYTKVQLKELEREYATNKFITKDKRRRISATTNLSERQVTIWFQNRRVKEKKVI).

The protein belongs to the Abd-B homeobox family. Binds DNA as a homodimer. Interacts with MEIS1, MEIS2 and MEIS3.

The protein localises to the nucleus. Its function is as follows. Sequence-specific, AT-rich binding transcription factor which is part of a developmental regulatory system that provides cells with specific positional identities on the anterior-posterior axis. This is Homeobox protein Hox-A13 (Hoxa13) from Mus musculus (Mouse).